The chain runs to 117 residues: Large ribosomal subunit protein bL20 (117 aa).

This sequence belongs to the bacterial ribosomal protein bL20 family.

In terms of biological role, binds directly to 23S ribosomal RNA and is necessary for the in vitro assembly process of the 50S ribosomal subunit. It is not involved in the protein synthesizing functions of that subunit. In Geotalea uraniireducens (strain Rf4) (Geobacter uraniireducens), this protein is Large ribosomal subunit protein bL20.